A 122-amino-acid polypeptide reads, in one-letter code: Small ribosomal subunit protein uS13 (122 aa).

The disordered stretch occupies residues 91 to 122 (RHRRGLPVHGQRTKTNARTRKGPKRTVAGKKK).

Belongs to the universal ribosomal protein uS13 family. As to quaternary structure, part of the 30S ribosomal subunit. Forms a loose heterodimer with protein S19. Forms two bridges to the 50S subunit in the 70S ribosome.

Located at the top of the head of the 30S subunit, it contacts several helices of the 16S rRNA. In the 70S ribosome it contacts the 23S rRNA (bridge B1a) and protein L5 of the 50S subunit (bridge B1b), connecting the 2 subunits; these bridges are implicated in subunit movement. Contacts the tRNAs in the A and P-sites. This chain is Small ribosomal subunit protein uS13, found in Kocuria rhizophila (strain ATCC 9341 / DSM 348 / NBRC 103217 / DC2201).